We begin with the raw amino-acid sequence, 430 residues long: Tol-Pal system protein TolB (430 aa).

A signal peptide spans 1 to 26 (MSLMTKLGLRALVASCLIAAGGAAHA).

This sequence belongs to the TolB family. The Tol-Pal system is composed of five core proteins: the inner membrane proteins TolA, TolQ and TolR, the periplasmic protein TolB and the outer membrane protein Pal. They form a network linking the inner and outer membranes and the peptidoglycan layer.

The protein resides in the periplasm. Part of the Tol-Pal system, which plays a role in outer membrane invagination during cell division and is important for maintaining outer membrane integrity. The chain is Tol-Pal system protein TolB from Paraburkholderia phymatum (strain DSM 17167 / CIP 108236 / LMG 21445 / STM815) (Burkholderia phymatum).